The chain runs to 210 residues: Calcium-activated potassium channel subunit beta-4 (210 aa).

At 1–19 (MAKLRVSYEYTEAEDKSIR) the chain is on the cytoplasmic side. Residues 20 to 40 (LGLFLIVSGILSLFIFGFCWL) traverse the membrane as a helical segment. Topologically, residues 41-167 (SPALQDLQAT…DVLLQRTHDE (127 aa)) are extracellular. N-linked (GlcNAc...) asparagine glycosylation is found at Asn-53 and Asn-90. The helical transmembrane segment at 168 to 188 (IVLLHCFLWPVVAFVVGVLIV) threads the bilayer. Residues 189–210 (VLTICAKSLAVKAEAMKKRKFS) are Cytoplasmic-facing.

It belongs to the KCNMB (TC 8.A.14.1) family. KCNMB4 subfamily. Interacts with KCNMA1 tetramer. There are probably 4 molecules of KCMNB4 per KCNMA1 tetramer. Interacts with FMR1 (via N-terminus). In terms of processing, phosphorylated. Phosphorylation modulates its effect on KCNMA1 activation kinetics. N-glycosylated. A highly glycosylated form is promoted by KCNMA1. Glycosylation, which is not required for the interaction with KCNMA1 and subcellular location, increases protection against charybdotoxin.

The protein localises to the membrane. Functionally, regulatory subunit of the calcium activated potassium KCNMA1 (maxiK) channel. Modulates the calcium sensitivity and gating kinetics of KCNMA1, thereby contributing to KCNMA1 channel diversity. Decreases the gating kinetics and calcium sensitivity of the KCNMA1 channel, but with fast deactivation kinetics. May decrease KCNMA1 channel openings at low calcium concentrations but increases channel openings at high calcium concentrations. Makes KCNMA1 channel resistant to 100 nM charybdotoxin (CTX) toxin concentrations. In Rattus norvegicus (Rat), this protein is Calcium-activated potassium channel subunit beta-4 (Kcnmb4).